Consider the following 302-residue polypeptide: Bifunctional protein FolD 2 (302 aa).

NADP(+) contacts are provided by residues 170-172 (GRS), serine 195, and isoleucine 236.

The protein belongs to the tetrahydrofolate dehydrogenase/cyclohydrolase family. In terms of assembly, homodimer.

It catalyses the reaction (6R)-5,10-methylene-5,6,7,8-tetrahydrofolate + NADP(+) = (6R)-5,10-methenyltetrahydrofolate + NADPH. It carries out the reaction (6R)-5,10-methenyltetrahydrofolate + H2O = (6R)-10-formyltetrahydrofolate + H(+). It participates in one-carbon metabolism; tetrahydrofolate interconversion. Catalyzes the oxidation of 5,10-methylenetetrahydrofolate to 5,10-methenyltetrahydrofolate and then the hydrolysis of 5,10-methenyltetrahydrofolate to 10-formyltetrahydrofolate. The protein is Bifunctional protein FolD 2 of Paracoccus denitrificans (strain Pd 1222).